The sequence spans 437 residues: Transcription factor ets-4 (437 aa).

The interval 1–30 is disordered; the sequence is MNGTGSVGHRWNSLSPEPHSGTESTASTPF. Positions 21–30 are enriched in polar residues; it reads GTESTASTPF. A Glycyl lysine isopeptide (Lys-Gly) (interchain with G-Cter in SUMO) cross-link involves residue Lys32. Ser73 carries the phosphoserine modification. Residue Lys83 forms a Glycyl lysine isopeptide (Lys-Gly) (interchain with G-Cter in SUMO) linkage. A PNT domain is found at 120–202; it reads HLIQDISTTC…AQLQVWKTGT (83 aa). The interval 275-302 is disordered; that stretch reads QGTVLPSPSNSDTSSNGSSQDMNDDDID. Over residues 280-293 the composition is skewed to low complexity; that stretch reads PSPSNSDTSSNGSS. The ETS DNA-binding region spans 349-432; sequence VHLWQFIREL…KKQRLVYKFL (84 aa).

The protein belongs to the ETS family. In terms of assembly, may interact with cebp-1. May interact with tdpt-1 to facilitate its sumoylation. Post-translationally, phosphorylation is required for axon regeneration. In terms of processing, sumoylated; sumoylation inhibits phosphorylation, which is required for probable interaction with cebp-1 and consequently the expression of svh-2. Expressed in cells of the anterior and posterior bulbs of the pharynx, seam cells, a few unidentified cells of the vulva, the hypodermis, several unidentified neurons, labial socket cells of the head and rectal cells.

Its subcellular location is the nucleus. Its function is as follows. Transcription factor which binds to 5'-GGAA/T-3' DNA consensus sequences. Both positively and negatively regulates the expression of target genes. Plays a role in the regulation of adult lifespan, which may in part be through modulation of daf-16 activity. Regulates the expression of genes such as svh-2 in response to axon injury and in addition, may function downstream of the cAMP signaling pathway to promote axon regeneration. Regulates the expression of lipid metabolism genes and may also control the expression of the RNA-binding protein rege-1 which too has been implicated in the control of fat accumulation. The polypeptide is Transcription factor ets-4 (Caenorhabditis elegans).